A 717-amino-acid polypeptide reads, in one-letter code: Protein Teyrha-meyrha (717 aa).

The segment covering 140-152 has biased composition (polar residues); sequence FRTDSASPTCTSH. 6 disordered regions span residues 140-214, 229-270, 440-498, 511-539, 563-594, and 624-717; these read FRTD…SNPA, HLAA…APPV, KIPP…QPGK, SQKDPHPDEHDVSTNVTTASSSSWPGEAP, DSCGVGVNDTNSSSSTHNNGGGSNKDLMMDTA, and QRRQ…DTKA. The segment covering 195–214 has biased composition (low complexity); that stretch reads ATSSSASSSSSSSCSTSNPA. The segment covering 235–263 has biased composition (basic residues); that stretch reads PHHHPHTHAHSHPHPLAHPHAHSHHHVGH. Over residues 442–451 the composition is skewed to basic and acidic residues; sequence PPEDDAKSQE. Over residues 452–466 the composition is skewed to acidic residues; that stretch reads EIETVDVESCNDEVP. Polar residues predominate over residues 471 to 482; that stretch reads ELATPSSGSSGT. Residues 513–522 show a composition bias toward basic and acidic residues; the sequence is KDPHPDEHDV. Composition is skewed to low complexity over residues 523-533 and 570-580; these read STNVTTASSSS and NDTNSSSSTHN. A compositionally biased stretch (polar residues) spans 630–640; that stretch reads QNVGSSRSLEN. Over residues 667–686 the composition is skewed to low complexity; that stretch reads NNNNNNNNNNNNSNSNNNNN. Polar residues predominate over residues 687–704; the sequence is PSTKYAESMENSLSQLSS.

In terms of tissue distribution, in embryos, expressed specifically in M12 (at protein level).

It localises to the nucleus. In terms of biological role, required for the correct synaptic targeting of motoneurons RP5 and V to muscle 12 (M12). May be involved in the negative regulation of Tl in M12. Involved in the correct patterning of veins in the proximal (costal) region of the wing blade. This chain is Protein Teyrha-meyrha, found in Drosophila melanogaster (Fruit fly).